We begin with the raw amino-acid sequence, 156 residues long: Small ribosomal subunit protein uS7 (156 aa).

This sequence belongs to the universal ribosomal protein uS7 family. In terms of assembly, part of the 30S ribosomal subunit. Contacts proteins S9 and S11.

Its function is as follows. One of the primary rRNA binding proteins, it binds directly to 16S rRNA where it nucleates assembly of the head domain of the 30S subunit. Is located at the subunit interface close to the decoding center, probably blocks exit of the E-site tRNA. This Prochlorococcus marinus (strain NATL2A) protein is Small ribosomal subunit protein uS7.